Here is a 313-residue protein sequence, read N- to C-terminus: Pseudouridine-5'-phosphate glycosidase (313 aa).

Catalysis depends on E34, which acts as the Proton donor. 2 residues coordinate substrate: K95 and V115. A Mn(2+)-binding site is contributed by D147. 149 to 151 (SAD) is a substrate binding site. K168 functions as the Nucleophile in the catalytic mechanism.

It belongs to the pseudouridine-5'-phosphate glycosidase family. In terms of assembly, homotrimer. It depends on Mn(2+) as a cofactor.

It catalyses the reaction D-ribose 5-phosphate + uracil = psi-UMP + H2O. Functionally, catalyzes the reversible cleavage of pseudouridine 5'-phosphate (PsiMP) to ribose 5-phosphate and uracil. Functions biologically in the cleavage direction, as part of a pseudouridine degradation pathway. This is Pseudouridine-5'-phosphate glycosidase from Deinococcus radiodurans (strain ATCC 13939 / DSM 20539 / JCM 16871 / CCUG 27074 / LMG 4051 / NBRC 15346 / NCIMB 9279 / VKM B-1422 / R1).